We begin with the raw amino-acid sequence, 166 residues long: Small ribosomal subunit protein uS5 (166 aa).

Positions 11-74 (LEDRVVAINR…DAARKNLIEV (64 aa)) constitute an S5 DRBM domain.

The protein belongs to the universal ribosomal protein uS5 family. Part of the 30S ribosomal subunit. Contacts proteins S4 and S8.

With S4 and S12 plays an important role in translational accuracy. Functionally, located at the back of the 30S subunit body where it stabilizes the conformation of the head with respect to the body. The chain is Small ribosomal subunit protein uS5 from Ligilactobacillus salivarius (strain UCC118) (Lactobacillus salivarius).